We begin with the raw amino-acid sequence, 885 residues long: MELRCGGLLFSSRFDSGNLAHVEKVESVSNDGEGVAGGASASTSSIASSPDYEFNVWTRPDCAETEFENGNRSWFYFSVRGGTPGKLIKINIMNMNKQSKLYSQGMAPFVRTLPTRPRWERIRDRPTFEMTETQFVLSFIHRFVEGRGATTFFAFCYPFSYSDCQDLLSQLDQRFLENSPTHSSPLDTIYYHRETLCYSLDGLRVDLLTISSCHGLREDREPRLEQLFPDASTPRPFRFTGKRIFFLSSRVHPGETPSSFVFNGFLDFILRPDDPRAQTLRRLFVFKLIPMLNPDGVVRGHYRTDSRGVNLNRQYLKPDAVLHPAIYGAKAVLLYHHVHSRLNSQSPSEHQHSSHLPPDAPLSDPEKADSLQNRAHLGRSSSGDKPEAWTQTEVAEQKPNSVWITPQESAEVEQLAPDAIPPRESGVAYYVDLHGHASKRGCFMYGNSFSDENTQVENMLYPKLISLNSAHFDFQGCNFSEKNMYARDRRDGQSKEGSGRVAIYKASGIIHSYTLECNYNTGRSVNSIPAACHDNGRASPPPPPAFPSRYTVELFEQVGRAMAIAALDMAECNPWPRIVLSEHSSLTNLRAWMLKHVRSSRGLSTTVNMSISKKRGSRTPPRSNNGLPVSCSENTLSRARSFSTGTSAGGSSSSQQNSPQMKNSPSFPFHGSRPAGLPGLGSSTQKVSHRVLGPVREPRSQDRRRRQQPVTHRPTSSSLAPSPTPASSNLASSHMGSCLLPNSLSISGSSCSFLSSGDKTEAVMVIGKGLLGAGPRIPCIRTRLQARPRLAQGSPPTRRGMRGSPGPTSPIPQTKKSSEPELGPRCTPRLPQAGPPRPCSAPAFSPISCSLSDSQSRICYSGGPLGQTEVCFVPKSPPFTVSPRV.

In terms of domain architecture, Peptidase M14 spans 157-570 (YPFSYSDCQD…AMAIAALDMA (414 aa)). The Zn(2+) site is built by histidine 252 and glutamate 255. The disordered stretch occupies residues 343–402 (NSQSPSEHQHSSHLPPDAPLSDPEKADSLQNRAHLGRSSSGDKPEAWTQTEVAEQKPNSV). Residues 388–402 (AWTQTEVAEQKPNSV) are compositionally biased toward polar residues. Zn(2+) is bound at residue histidine 434. Residue glutamate 516 is the Proton donor/acceptor of the active site. 2 disordered regions span residues 605–733 (TTVN…LASS) and 783–839 (RLQA…PRPC). The span at 620–640 (PPRSNNGLPVSCSENTLSRAR) shows a compositional bias: polar residues. Low complexity-rich tracts occupy residues 641–666 (SFST…NSPS) and 714–733 (PTSS…LASS). The residue at position 840 (serine 840) is a Phosphoserine.

This sequence belongs to the peptidase M14 family. It depends on Zn(2+) as a cofactor.

The protein resides in the cytoplasm. It is found in the cytosol. The protein localises to the nucleus. Its subcellular location is the cytoskeleton. It localises to the spindle. The protein resides in the midbody. The enzyme catalyses gamma-L-glutamyl-L-glutamyl-[protein] + H2O = L-glutamyl-[protein] + L-glutamate. It carries out the reaction (L-glutamyl)(n+1)-gamma-L-glutamyl-L-glutamyl-[protein] + H2O = (L-glutamyl)(n)-gamma-L-glutamyl-L-glutamyl-[protein] + L-glutamate. It catalyses the reaction C-terminal L-alpha-aminoacyl-L-glutamyl-[tubulin] + H2O = C-terminal L-alpha-aminoacyl-[tubulin] + L-glutamate. The catalysed reaction is C-terminal L-alpha-aminoacyl-L-glutamyl-L-glutamyl-[tubulin] + H2O = C-terminal L-alpha-aminoacyl-L-glutamyl-[tubulin] + L-glutamate. In terms of biological role, metallocarboxypeptidase that mediates deglutamylation of tubulin and non-tubulin target proteins. Catalyzes the removal of polyglutamate side chains present on the gamma-carboxyl group of glutamate residues within the C-terminal tail of alpha- and beta-tubulin. Cleaves alpha- and gamma-linked polyglutamate tubulin side-chain, as well as the branching point glutamate. Also catalyzes the removal of alpha-linked glutamate residues from the carboxy-terminus of alpha-tubulin. Mediates deglutamylation of nucleotidyltransferase CGAS, leading to CGAS antiviral defense response activation. The polypeptide is Cytosolic carboxypeptidase-like protein 5 (AGBL5) (Bos taurus (Bovine)).